The sequence spans 461 residues: Photosystem II CP43 reaction center protein (461 aa).

Residues 1 to 48 are Cytoplasmic-facing; it reads MVTLSSNSIFATNRDQESSGFAWWAGNARLINLSGKLLGAHVAHAGLI. A helical membrane pass occupies residues 49–71; it reads VFWAGAMTLFELAHFIPEKPMYE. Over 72–111 the chain is Lumenal; that stretch reads QGLILIPHIATLGWGVGPGGEVVDTFPFFVVGVVHLISSA. The helical transmembrane segment at 112–133 threads the bilayer; it reads VLGFGGVYHAIRGPETLEEYSS. The Cytoplasmic portion of the chain corresponds to 134–155; it reads FFGYDWKDKNKMTTILGFHLIV. A helical transmembrane segment spans residues 156-178; sequence LGIGALLLVAKAMFFGGLYDTWA. Topologically, residues 179–232 are lumenal; sequence PGGGDVRVITNPTLDPRVIFGYLLKSPFGGEGWIVSVNNLEDVVGGHIWIGLIC. The helical transmembrane segment at 233–253 threads the bilayer; sequence IAGGIWHILTTPFGWARRAFI. At 254-268 the chain is on the cytoplasmic side; that stretch reads WSGEAYLSYSLGALS. The chain crosses the membrane as a helical span at residues 269–289; it reads MMGFIATCFVWFNNTVYPSEF. Over 290-424 the chain is Lumenal; it reads YGPTGPEASQ…ATSHFVLAFF (135 aa). Residue Glu355 participates in [CaMn4O5] cluster binding. Residues 425–449 traverse the membrane as a helical segment; the sequence is FLVGHLWHAGRARAAAAGFEKGIDR. Over 450 to 461 the chain is Cytoplasmic; sequence ESEPVLSMPSLD.

PSII is composed of 1 copy each of membrane proteins PsbA, PsbB, PsbC, PsbD, PsbE, PsbF, PsbH, PsbI, PsbJ, PsbK, PsbL, PsbM, PsbT, PsbX, PsbY, PsbZ, Psb30/Ycf12, peripheral proteins PsbO, CyanoQ (PsbQ), PsbU, PsbV and a large number of cofactors. It forms dimeric complexes. Part of a photosystem II (PSII) assembly intermediate complex PSII-I; crystallized from a strain deleted of psbJ, it forms monomeric PSII before addition of the oxygen evolving complex. PSII-I includes 3 assembly factors not found in mature PSII (Psb27, Psb28 and Psb34), and CP43 (this protein) is not in its mature conformation. Binds multiple chlorophylls and provides some of the ligands for the Ca-4Mn-5O cluster of the oxygen-evolving complex. It may also provide a ligand for a Cl- that is required for oxygen evolution. PSII binds additional chlorophylls, carotenoids and specific lipids. serves as cofactor.

The protein resides in the cellular thylakoid membrane. Its function is as follows. One of the components of the core complex of photosystem II (PSII). It binds chlorophyll and helps catalyze the primary light-induced photochemical processes of PSII. PSII is a light-driven water:plastoquinone oxidoreductase, using light energy to abstract electrons from H(2)O, generating O(2) and a proton gradient subsequently used for ATP formation. In Thermosynechococcus vestitus (strain NIES-2133 / IAM M-273 / BP-1), this protein is Photosystem II CP43 reaction center protein.